Consider the following 352-residue polypeptide: Ion-translocating oxidoreductase complex subunit D (352 aa).

A run of 5 helical transmembrane segments spans residues 20-40 (IMLL…WFFG), 42-62 (GTLV…ALVL), 78-109 (ALLT…VIIA), 123-143 (PAMI…TSWL), and 148-168 (IAVN…GHTA). Thr-187 is modified (FMN phosphoryl threonine). 5 helical membrane-spanning segments follow: residues 214–234 (ILAG…GVWL), 242–262 (WHIP…GWLF), 267–287 (LAAP…FFIL), 301–321 (LIFG…GGYP), and 322–342 (DGVA…DYYT).

The protein belongs to the NqrB/RnfD family. The complex is composed of six subunits: RsxA, RsxB, RsxC, RsxD, RsxE and RsxG. Requires FMN as cofactor.

Its subcellular location is the cell inner membrane. Its function is as follows. Part of a membrane-bound complex that couples electron transfer with translocation of ions across the membrane. Required to maintain the reduced state of SoxR. This is Ion-translocating oxidoreductase complex subunit D from Escherichia coli O6:K15:H31 (strain 536 / UPEC).